Here is a 101-residue protein sequence, read N- to C-terminus: Small ribosomal subunit protein bS16 (101 aa).

The protein belongs to the bacterial ribosomal protein bS16 family.

The sequence is that of Small ribosomal subunit protein bS16 from Ureaplasma parvum serovar 3 (strain ATCC 700970).